We begin with the raw amino-acid sequence, 967 residues long: Vitamin B12-dependent ribonucleotide reductase (967 aa).

The segment at 1-23 (MTETASGPARSSRAKGTKAGKGL) is disordered. Residues Ser143, 159–160 (AC), Gly188, 364–368 (NPCSE), and 554–558 (PTGTI) contribute to the substrate site. Cysteines 160 and 377 form a disulfide. The active-site Proton acceptor is Asn364. Cys366 functions as the Cysteine radical intermediate in the catalytic mechanism. The active-site Proton acceptor is the Glu368.

Belongs to the ribonucleoside diphosphate reductase class-2 family. It depends on adenosylcob(III)alamin as a cofactor.

It catalyses the reaction a 2'-deoxyribonucleoside 5'-diphosphate + [thioredoxin]-disulfide + H2O = a ribonucleoside 5'-diphosphate + [thioredoxin]-dithiol. Its function is as follows. Catalyzes the reduction of ribonucleotides to deoxyribonucleotides. May function to provide a pool of deoxyribonucleotide precursors for DNA repair during oxygen limitation and/or for immediate growth after restoration of oxygen. The protein is Vitamin B12-dependent ribonucleotide reductase (nrdJ) of Streptomyces coelicolor (strain ATCC BAA-471 / A3(2) / M145).